A 615-amino-acid chain; its full sequence is Medium-chain acyl-CoA ligase ACSF2, mitochondrial (615 aa).

Residues 1-41 constitute a mitochondrion transit peptide; the sequence is MAVYVGMLRLGRLCAGSSGVLGARVALSRSWQEARLQGVRF. At K179 the chain carries N6-acetyllysine. K182 bears the N6-acetyllysine; alternate mark. K182 carries the post-translational modification N6-succinyllysine; alternate. 263-271 contributes to the ATP binding site; the sequence is TSGTTGSPK. Residues K340 and K398 each carry the N6-acetyllysine modification. K478 bears the N6-succinyllysine mark. ATP-binding residues include D493 and R508. At K510 the chain carries N6-acetyllysine. K544 and K570 each carry N6-acetyllysine; alternate. N6-succinyllysine; alternate is present on residues K544 and K570. Residue K599 participates in ATP binding. K599 carries the post-translational modification N6-succinyllysine.

This sequence belongs to the ATP-dependent AMP-binding enzyme family.

The protein localises to the mitochondrion. It catalyses the reaction a medium-chain fatty acid + ATP + CoA = a medium-chain fatty acyl-CoA + AMP + diphosphate. It carries out the reaction octanoate + ATP + CoA = octanoyl-CoA + AMP + diphosphate. Functionally, acyl-CoA synthases catalyze the initial reaction in fatty acid metabolism, by forming a thioester with CoA. Has some preference toward medium-chain substrates. Plays a role in adipocyte differentiation. The chain is Medium-chain acyl-CoA ligase ACSF2, mitochondrial from Pongo abelii (Sumatran orangutan).